A 223-amino-acid polypeptide reads, in one-letter code: ATP-dependent dethiobiotin synthetase BioD (223 aa).

T16 is a binding site for Mg(2+). K37 is an active-site residue. S41 lines the substrate pocket. Mg(2+)-binding residues include D50 and E111. Residues D50, 111–114 (EGAG), 171–172 (NQ), 201–203 (AHV), and E208 each bind ATP.

The protein belongs to the dethiobiotin synthetase family. Homodimer. Mg(2+) serves as cofactor.

It localises to the cytoplasm. The enzyme catalyses (7R,8S)-7,8-diammoniononanoate + CO2 + ATP = (4R,5S)-dethiobiotin + ADP + phosphate + 3 H(+). The protein operates within cofactor biosynthesis; biotin biosynthesis; biotin from 7,8-diaminononanoate: step 1/2. Functionally, catalyzes a mechanistically unusual reaction, the ATP-dependent insertion of CO2 between the N7 and N8 nitrogen atoms of 7,8-diaminopelargonic acid (DAPA, also called 7,8-diammoniononanoate) to form a ureido ring. This Anaeromyxobacter sp. (strain Fw109-5) protein is ATP-dependent dethiobiotin synthetase BioD.